We begin with the raw amino-acid sequence, 284 residues long: Bifunctional protein FolD (284 aa).

Residues 165 to 167 (GRS) and serine 190 contribute to the NADP(+) site.

This sequence belongs to the tetrahydrofolate dehydrogenase/cyclohydrolase family. As to quaternary structure, homodimer.

It carries out the reaction (6R)-5,10-methylene-5,6,7,8-tetrahydrofolate + NADP(+) = (6R)-5,10-methenyltetrahydrofolate + NADPH. It catalyses the reaction (6R)-5,10-methenyltetrahydrofolate + H2O = (6R)-10-formyltetrahydrofolate + H(+). It participates in one-carbon metabolism; tetrahydrofolate interconversion. Catalyzes the oxidation of 5,10-methylenetetrahydrofolate to 5,10-methenyltetrahydrofolate and then the hydrolysis of 5,10-methenyltetrahydrofolate to 10-formyltetrahydrofolate. This is Bifunctional protein FolD from Streptococcus gordonii (strain Challis / ATCC 35105 / BCRC 15272 / CH1 / DL1 / V288).